Reading from the N-terminus, the 279-residue chain is ESX-1 secretion-associated protein EspG1 (279 aa).

It belongs to the EspG family. As to quaternary structure, interacts specifically with ESX-1-dependent PE/PPE proteins.

It localises to the cytoplasm. In terms of biological role, specific chaperone for cognate PE/PPE proteins. Plays an important role in preventing aggregation of PE/PPE dimers. In Mycobacterium marinum (strain ATCC BAA-535 / M), this protein is ESX-1 secretion-associated protein EspG1.